The primary structure comprises 542 residues: Carboxypeptidase Y homolog A (542 aa).

The signal sequence occupies residues 1-17 (MRVLPATLLVGAASAAV). A propeptide spanning residues 18–123 (PPLQQVLGRP…KLEAYDLRIK (106 aa)) is cleaved from the precursor. Intrachain disulfides connect C178–C418, C312–C326, C336–C359, C343–C352, and C381–C388. N209 carries an N-linked (GlcNAc...) asparagine glycan. The active site involves S265. The active site involves D457. N508 carries an N-linked (GlcNAc...) asparagine glycan. Residue H519 is part of the active site.

This sequence belongs to the peptidase S10 family.

It is found in the vacuole. The catalysed reaction is Release of a C-terminal amino acid with broad specificity.. In terms of biological role, vacuolar carboxypeptidase involved in degradation of small peptides. Digests preferentially peptides containing an aliphatic or hydrophobic residue in P1' position, as well as methionine, leucine or phenylalanine in P1 position of ester substrate. The protein is Carboxypeptidase Y homolog A (cpyA) of Aspergillus oryzae (strain ATCC 42149 / RIB 40) (Yellow koji mold).